We begin with the raw amino-acid sequence, 496 residues long: Galactokinase (496 aa).

At alanine 2 the chain carries N-acetylalanine. The alpha-D-galactose site is built by arginine 56, glutamate 62, histidine 63, and aspartate 65. Glycine 161, glycine 163, serine 165, and serine 166 together coordinate ATP. Aspartate 210 is a binding site for alpha-D-galactose. The active-site Proton acceptor is the aspartate 210. ATP is bound by residues serine 252, glutamine 253, and lysine 254. Tyrosine 262 lines the alpha-D-galactose pocket.

It belongs to the GHMP kinase family. GalK subfamily. Mg(2+) is required as a cofactor. The cofactor is Mn(2+). Requires Ca(2+) as cofactor. As to expression, expressed in roots, stems, leaves, flowers and young siliques. Higher expression in the elongating middle stem region than in the lower or upper stem region.

It catalyses the reaction alpha-D-galactose + ATP = alpha-D-galactose 1-phosphate + ADP + H(+). The protein operates within carbohydrate metabolism; galactose metabolism. In terms of biological role, sugar-1-kinase with a very high substrate specificity for the alpha-anomeric configuration of D-galacose (D-Gal). Also efficiently converts 2-deoxy-D-Gal to 2-deoxy-D-al-1-phosphate. This is Galactokinase (GAL1) from Arabidopsis thaliana (Mouse-ear cress).